A 112-amino-acid polypeptide reads, in one-letter code: Putative pterin-4-alpha-carbinolamine dehydratase (112 aa).

It belongs to the pterin-4-alpha-carbinolamine dehydratase family.

It catalyses the reaction (4aS,6R)-4a-hydroxy-L-erythro-5,6,7,8-tetrahydrobiopterin = (6R)-L-erythro-6,7-dihydrobiopterin + H2O. This chain is Putative pterin-4-alpha-carbinolamine dehydratase, found in Shewanella denitrificans (strain OS217 / ATCC BAA-1090 / DSM 15013).